We begin with the raw amino-acid sequence, 589 residues long: Intermediate filament protein ifb-1 (589 aa).

A disordered region spans residues 1-42; that stretch reads MSSHKESSEYEMQYRSTIQPRTAVRSQSRQSGNYVSGGNGAG. The interval 8-84 is head; that stretch reads SEYEMQYRST…LEATDKEKKT (77 aa). Over residues 14–30 the composition is skewed to polar residues; sequence YRSTIQPRTAVRSQSRQ. Residues 81 to 433 form the IF rod domain; the sequence is EKKTLQGLND…KMLEGEETRV (353 aa). The coil 1A stretch occupies residues 85–116; the sequence is LQGLNDRLGNYIDRVKKLEEQNRKLVADLDEL. Residues 117 to 130 form a linker 1 region; it reads RGKWGKDTSEIKIK. Positions 131–268 are coil 1B; sequence YSESLSTARK…RVHEQEVKEL (138 aa). Residues 269–285 form a linker 12 region; it reads QALLAQAPADTREFFKN. Residues 286-433 form a coil 2 region; that stretch reads ELALAIRDIK…KMLEGEETRV (148 aa). The tract at residues 434-588 is tail; the sequence is GLTQMVEQAV…THTQKTIQSG (155 aa). The interval 444-470 is disordered; it reads KTHSLQQQENTDSTRSVRGEVSTKTTF. An LTD domain is found at 466-584; sequence TKTTFQRSAK…EERATHTQKT (119 aa).

The protein belongs to the intermediate filament family. In terms of assembly, forms some heteromeric filaments with ifa-1, ifa-2, ifa-3 and probably ifa-4. As to expression, expressed in epidermal cells. Expressed in amphid sensory neurons, the excretory cells, the vulva, the uterus, the rectum and some neurons of the tail. Isoform a and isoform b display a similar pattern of expression. Isoform a is predominant in pharyngeal tonofilaments.

It is found in the cytoplasm. Cytoplasmic intermediate filaments provide mechanical strength to cells. Essential protein, involved in attachment structures in epidermal cells that connect muscles to the external cuticle. Required in morphogenesis and epidermal integrity. Probable component of embryonic epidermal attachment structures. Functions in larval muscle attachment independently of ifa-2. The chain is Intermediate filament protein ifb-1 (ifb-1) from Caenorhabditis elegans.